The sequence spans 528 residues: uncharacterized protein (528 aa).

Basic residues-rich tracts occupy residues 1–16 and 25–43; these read MGKASKATKKFTKNHL and QLARSKKVYGTKNRNSHTK. Positions 1–59 are disordered; sequence MGKASKATKKFTKNHLKNTIERRKQLARSKKVYGTKNRNSHTKNKLESGTNDNNKNKED.

The protein belongs to the NOC2 family.

Its subcellular location is the nucleus. It localises to the nucleolus. This is an uncharacterized protein from Schizosaccharomyces pombe (strain 972 / ATCC 24843) (Fission yeast).